Here is a 1070-residue protein sequence, read N- to C-terminus: Granule associated Rac and RHOG effector protein 1 (1070 aa).

Disordered stretches follow at residues 681–771 (EQKA…VGAG), 855–992 (SQAM…STLP), and 1032–1070 (SYVQTPPQPPPPPAHKAAPKGFKAFPGKGERRPAYLPQY). The span at 692–702 (PSLPVPPPPRA) shows a compositional bias: pro residues. Low complexity-rich tracts occupy residues 719-742 (PQQQSPKQQQPQVQYYQHLLQPIG), 906-924 (AQGDSASSSDETSSANGDS), and 951-962 (TSTLPSPPLLTT). The residue at position 723 (Ser-723) is a Phosphoserine. Residues 977–992 (PKAPWQHPSPLPSTLP) show a composition bias toward pro residues. The span at 1046–1058 (HKAAPKGFKAFPG) shows a compositional bias: low complexity.

In terms of assembly, interacts with AGO2 and TNRC6A.

Its subcellular location is the cytoplasm. It is found in the P-body. Acts as an effector of RAC1. Associates with CCR4-NOT complex which is one of the major cellular mRNA deadenylases and is linked to various cellular processes including bulk mRNA degradation, miRNA-mediated repression, translational repression during translational initiation and general transcription regulation. May also play a role in miRNA silencing machinery. The chain is Granule associated Rac and RHOG effector protein 1 from Homo sapiens (Human).